The sequence spans 120 residues: Ribosomal protein eL22-like 1 (120 aa).

This sequence belongs to the eukaryotic ribosomal protein eL22 family.

This is Ribosomal protein eL22-like 1 (rpl22l1) from Xenopus tropicalis (Western clawed frog).